We begin with the raw amino-acid sequence, 204 residues long: UPF0637 protein lmo1065 (204 aa).

This sequence belongs to the UPF0637 family.

This is UPF0637 protein lmo1065 from Listeria monocytogenes serovar 1/2a (strain ATCC BAA-679 / EGD-e).